A 640-amino-acid polypeptide reads, in one-letter code: 1-deoxy-D-xylulose-5-phosphate synthase (640 aa).

Thiamine diphosphate contacts are provided by residues histidine 79 and 120–122 (GHS). A Mg(2+)-binding site is contributed by aspartate 151. Thiamine diphosphate-binding positions include 152–153 (GS), asparagine 180, tyrosine 290, and glutamate 372. A Mg(2+)-binding site is contributed by asparagine 180.

This sequence belongs to the transketolase family. DXPS subfamily. As to quaternary structure, homodimer. Mg(2+) is required as a cofactor. It depends on thiamine diphosphate as a cofactor.

It carries out the reaction D-glyceraldehyde 3-phosphate + pyruvate + H(+) = 1-deoxy-D-xylulose 5-phosphate + CO2. The protein operates within metabolic intermediate biosynthesis; 1-deoxy-D-xylulose 5-phosphate biosynthesis; 1-deoxy-D-xylulose 5-phosphate from D-glyceraldehyde 3-phosphate and pyruvate: step 1/1. In terms of biological role, catalyzes the acyloin condensation reaction between C atoms 2 and 3 of pyruvate and glyceraldehyde 3-phosphate to yield 1-deoxy-D-xylulose-5-phosphate (DXP). In Rhodopseudomonas palustris (strain BisA53), this protein is 1-deoxy-D-xylulose-5-phosphate synthase.